Consider the following 381-residue polypeptide: MRSHTITMTTTSVSSWPYSSHRMRFITNHSDQPPQNFSATPNVTTCPMDEKLLSTVLTTSYSVIFIVGLVGNIIALYVFLGIHRKRNSIQIYLLNVAIADLLLIFCLPFRIMYHINQNKWTLGVILCKVVGTLFYMNMYISIILLGFISLDRYIKINRSIQQRKAITTKQSIYVCCIVWMLALGGFLTMIILTLKKGGHNSTMCFHYRDKHNAKGEAIFNFILVVMFWLIFLLIILSYIKIGKNLLRISKRRSKFPNSGKYATTARNSFIVLIIFTICFVPYHAFRFIYISSQLNVSSCYWKEIVHKTNEIMLVLSSFNSCLDPVMYFLMSSNIRKIMCQLLFRRFQGEPSRSESTSEFKPGYSLHDTSVAVKIQSSSKST.

The Extracellular portion of the chain corresponds to 1–61 (MRSHTITMTT…LLSTVLTTSY (61 aa)). Residues N28, N36, and N42 are each glycosylated (N-linked (GlcNAc...) asparagine). The chain crosses the membrane as a helical span at residues 62 to 82 (SVIFIVGLVGNIIALYVFLGI). At 83 to 88 (HRKRNS) the chain is on the cytoplasmic side. The chain crosses the membrane as a helical span at residues 89–109 (IQIYLLNVAIADLLLIFCLPF). Residues 110–128 (RIMYHINQNKWTLGVILCK) are Extracellular-facing. An intrachain disulfide couples C127 to C204. A helical transmembrane segment spans residues 129-149 (VVGTLFYMNMYISIILLGFIS). The Cytoplasmic segment spans residues 150–171 (LDRYIKINRSIQQRKAITTKQS). The chain crosses the membrane as a helical span at residues 172-192 (IYVCCIVWMLALGGFLTMIIL). Topologically, residues 193 to 216 (TLKKGGHNSTMCFHYRDKHNAKGE) are extracellular. An N-linked (GlcNAc...) asparagine glycan is attached at N200. Residues 217 to 237 (AIFNFILVVMFWLIFLLIILS) form a helical membrane-spanning segment. At 238-269 (YIKIGKNLLRISKRRSKFPNSGKYATTARNSF) the chain is on the cytoplasmic side. The helical transmembrane segment at 270-290 (IVLIIFTICFVPYHAFRFIYI) threads the bilayer. Topologically, residues 291-310 (SSQLNVSSCYWKEIVHKTNE) are extracellular. The N-linked (GlcNAc...) asparagine glycan is linked to N295. A helical membrane pass occupies residues 311–331 (IMLVLSSFNSCLDPVMYFLMS). Topologically, residues 332–381 (SNIRKIMCQLLFRRFQGEPSRSESTSEFKPGYSLHDTSVAVKIQSSSKST) are cytoplasmic.

It belongs to the G-protein coupled receptor 1 family.

It is found in the cell membrane. In terms of biological role, G-protein-coupled receptor of lysophosphatidylserine (LysoPS) that plays different roles in immune response. Acts a damage-sensing receptor that triggers tissue repair upon recognition of dying neutrophils. Mechanistically, apoptotic neutrophils release lysophosphatydilserine that are recognized by type 3 innate lymphoid cells (ILC3s) via GPR34, which activates downstream PI3K-AKT and RAS-ERK signaling pathways leading to STAT3 activation and IL-22 production. Plays an important role in microglial function, controlling morphology and phagocytosis. In Gorilla gorilla gorilla (Western lowland gorilla), this protein is Probable G-protein coupled receptor 34 (GPR34).